Consider the following 310-residue polypeptide: uncharacterized protein (310 aa).

A run of 9 helical transmembrane segments spans residues 1–21 (MIYF…MFSK), 38–58 (FFFY…VVYT), 74–94 (TSYF…FFIF), 110–130 (YGLW…SFLF), 135–155 (WILY…IFFS), 194–214 (IFIT…IVFS), 228–248 (LFII…MYLF), 256–276 (FPIM…KILI), and 284–304 (IFLT…INLI).

Belongs to the TerC family.

The protein resides in the cell membrane. This is an uncharacterized protein from Buchnera aphidicola subsp. Schizaphis graminum (strain Sg).